A 298-amino-acid polypeptide reads, in one-letter code: Bifunctional protein FolD (298 aa).

NADP(+) contacts are provided by residues 166–168, serine 191, and isoleucine 232; that span reads GRS.

The protein belongs to the tetrahydrofolate dehydrogenase/cyclohydrolase family. Homodimer.

The catalysed reaction is (6R)-5,10-methylene-5,6,7,8-tetrahydrofolate + NADP(+) = (6R)-5,10-methenyltetrahydrofolate + NADPH. It catalyses the reaction (6R)-5,10-methenyltetrahydrofolate + H2O = (6R)-10-formyltetrahydrofolate + H(+). It functions in the pathway one-carbon metabolism; tetrahydrofolate interconversion. In terms of biological role, catalyzes the oxidation of 5,10-methylenetetrahydrofolate to 5,10-methenyltetrahydrofolate and then the hydrolysis of 5,10-methenyltetrahydrofolate to 10-formyltetrahydrofolate. This Erythrobacter litoralis (strain HTCC2594) protein is Bifunctional protein FolD.